The chain runs to 580 residues: Proline--tRNA ligase (580 aa).

Belongs to the class-II aminoacyl-tRNA synthetase family. ProS type 1 subfamily. As to quaternary structure, homodimer.

The protein resides in the cytoplasm. The catalysed reaction is tRNA(Pro) + L-proline + ATP = L-prolyl-tRNA(Pro) + AMP + diphosphate. Its function is as follows. Catalyzes the attachment of proline to tRNA(Pro) in a two-step reaction: proline is first activated by ATP to form Pro-AMP and then transferred to the acceptor end of tRNA(Pro). As ProRS can inadvertently accommodate and process non-cognate amino acids such as alanine and cysteine, to avoid such errors it has two additional distinct editing activities against alanine. One activity is designated as 'pretransfer' editing and involves the tRNA(Pro)-independent hydrolysis of activated Ala-AMP. The other activity is designated 'posttransfer' editing and involves deacylation of mischarged Ala-tRNA(Pro). The misacylated Cys-tRNA(Pro) is not edited by ProRS. The polypeptide is Proline--tRNA ligase (Maridesulfovibrio salexigens (strain ATCC 14822 / DSM 2638 / NCIMB 8403 / VKM B-1763) (Desulfovibrio salexigens)).